A 510-amino-acid polypeptide reads, in one-letter code: ATP synthase subunit alpha 1 (510 aa).

Residue 169–176 (GDRQTGKT) coordinates ATP.

The protein belongs to the ATPase alpha/beta chains family. As to quaternary structure, F-type ATPases have 2 components, CF(1) - the catalytic core - and CF(0) - the membrane proton channel. CF(1) has five subunits: alpha(3), beta(3), gamma(1), delta(1), epsilon(1). CF(0) has three main subunits: a(1), b(2) and c(9-12). The alpha and beta chains form an alternating ring which encloses part of the gamma chain. CF(1) is attached to CF(0) by a central stalk formed by the gamma and epsilon chains, while a peripheral stalk is formed by the delta and b chains.

It is found in the cell inner membrane. It carries out the reaction ATP + H2O + 4 H(+)(in) = ADP + phosphate + 5 H(+)(out). Functionally, produces ATP from ADP in the presence of a proton gradient across the membrane. The alpha chain is a regulatory subunit. In Marinomonas sp. (strain MWYL1), this protein is ATP synthase subunit alpha 1.